The primary structure comprises 87 residues: Beta-defensin 109C (87 aa).

Residues 1–22 (MRLHLLLLILLLFSILLSPVRG) form the signal peptide. Intrachain disulfides connect Cys-31-Cys-59, Cys-38-Cys-53, and Cys-43-Cys-60.

This sequence belongs to the beta-defensin family.

Its subcellular location is the secreted. Functionally, has antibacterial activity. This is Beta-defensin 109C (DEFB109C) from Homo sapiens (Human).